Consider the following 118-residue polypeptide: Small ribosomal subunit protein uS13 (118 aa).

The tract at residues 94–118 is disordered; that stretch reads SLPLRGQRTKTNARTRKGPRKPIRK.

This sequence belongs to the universal ribosomal protein uS13 family. As to quaternary structure, part of the 30S ribosomal subunit. Forms a loose heterodimer with protein S19. Forms two bridges to the 50S subunit in the 70S ribosome.

In terms of biological role, located at the top of the head of the 30S subunit, it contacts several helices of the 16S rRNA. In the 70S ribosome it contacts the 23S rRNA (bridge B1a) and protein L5 of the 50S subunit (bridge B1b), connecting the 2 subunits; these bridges are implicated in subunit movement. Contacts the tRNAs in the A and P-sites. In Shewanella woodyi (strain ATCC 51908 / MS32), this protein is Small ribosomal subunit protein uS13.